The primary structure comprises 253 residues: 1-(5-phosphoribosyl)-5-[(5-phosphoribosylamino)methylideneamino] imidazole-4-carboxamide isomerase (253 aa).

Aspartate 19 functions as the Proton acceptor in the catalytic mechanism. The active-site Proton donor is aspartate 141.

It belongs to the HisA/HisF family.

The protein localises to the cytoplasm. It catalyses the reaction 1-(5-phospho-beta-D-ribosyl)-5-[(5-phospho-beta-D-ribosylamino)methylideneamino]imidazole-4-carboxamide = 5-[(5-phospho-1-deoxy-D-ribulos-1-ylimino)methylamino]-1-(5-phospho-beta-D-ribosyl)imidazole-4-carboxamide. The protein operates within amino-acid biosynthesis; L-histidine biosynthesis; L-histidine from 5-phospho-alpha-D-ribose 1-diphosphate: step 4/9. The polypeptide is 1-(5-phosphoribosyl)-5-[(5-phosphoribosylamino)methylideneamino] imidazole-4-carboxamide isomerase (Rhodopirellula baltica (strain DSM 10527 / NCIMB 13988 / SH1)).